The primary structure comprises 391 residues: Glycerol-3-phosphate dehydrogenase [NAD(+)] 1 (391 aa).

Residues glycine 41 to glycine 46, phenylalanine 129, lysine 152, and alanine 185 each bind NAD(+). Substrate is bound at residue lysine 152. The Proton acceptor role is filled by lysine 245. 2 residues coordinate NAD(+): arginine 310 and glutamine 339. Residue arginine 310–asparagine 311 participates in substrate binding.

Belongs to the NAD-dependent glycerol-3-phosphate dehydrogenase family.

It localises to the cytoplasm. The enzyme catalyses sn-glycerol 3-phosphate + NAD(+) = dihydroxyacetone phosphate + NADH + H(+). The chain is Glycerol-3-phosphate dehydrogenase [NAD(+)] 1 (GPD1) from Saccharomyces uvarum (Yeast).